The primary structure comprises 220 residues: Chaperone protein TorD (220 aa).

This sequence belongs to the TorD/DmsD family. TorD subfamily.

The protein localises to the cytoplasm. Involved in the biogenesis of TorA. Acts on TorA before the insertion of the molybdenum cofactor and, as a result, probably favors a conformation of the apoenzyme that is competent for acquiring the cofactor. This is Chaperone protein TorD from Vibrio cholerae serotype O1 (strain ATCC 39541 / Classical Ogawa 395 / O395).